A 73-amino-acid chain; its full sequence is Hypotensin-like peptide (73 aa).

The N-terminal stretch at 1–25 (MKMMIAIVFVSILLLMFSLSSTAMG) is a signal peptide.

In terms of tissue distribution, expressed by the venom gland.

The protein resides in the secreted. Its function is as follows. May potentiate the hypotensive effect of bradykinin. This Tityus serrulatus (Brazilian scorpion) protein is Hypotensin-like peptide.